The following is a 606-amino-acid chain: Albumin A (606 aa).

A signal peptide spans 1–18 (MKWITLICLLISSTLIES). The propeptide occupies 19–24 (RIIFKR). Albumin domains lie at 22-211 (FKRD…ELMK), 212-401 (HSHS…RFMN), and 402-599 (EAKE…VLIE). H30 serves as a coordination point for Cu cation. Intrachain disulfides connect C80-C89, C102-C118, C117-C128, C148-C193, C192-C201, C224-C270, C269-C277, C289-C303, C302-C313, C340-C383, C382-C391, C414-C460, C459-C470, C483-C499, C498-C509, C536-C581, and C580-C589.

Belongs to the ALB/AFP/VDB family. Plasma.

It localises to the secreted. Its function is as follows. Binds water, Ca(2+), Na(+), K(+), fatty acids, hormones, bilirubin and drugs. Its main function is the regulation of the colloidal osmotic pressure of blood. The sequence is that of Albumin A (alb-a) from Xenopus laevis (African clawed frog).